Consider the following 259-residue polypeptide: MNQFIPRGTSKISARGLNVHYGEKQALHDIDLDIPAGEVTALIGPSGCGKSTFLRCINRMNDMVDGAKVTGSLTLDGSDVYDRSLDVVQLRARVGMVFQKPNPFPKSIYDNVAYGPRIHGLARDQAELDEIVMNSLEKAGLLAEVESRLSESGTGLSGGQQQRLCIARAIAVAPEVILMDEPCSALDPIATAKVEELIDELRDNYTIVIVTHSMQQAARVSQRTAFFHLGKLIEVGGTEEIFTNPKEPLTQGYITGRFG.

One can recognise an ABC transporter domain in the interval 12 to 254; sequence ISARGLNVHY…PKEPLTQGYI (243 aa). Position 44-51 (44-51) interacts with ATP; the sequence is GPSGCGKS.

The protein belongs to the ABC transporter superfamily. Phosphate importer (TC 3.A.1.7) family. In terms of assembly, the complex is composed of two ATP-binding proteins (PstB), two transmembrane proteins (PstC and PstA) and a solute-binding protein (PstS).

The protein resides in the cell inner membrane. The catalysed reaction is phosphate(out) + ATP + H2O = ADP + 2 phosphate(in) + H(+). Part of the ABC transporter complex PstSACB involved in phosphate import. Responsible for energy coupling to the transport system. The chain is Phosphate import ATP-binding protein PstB 2 from Paramagnetospirillum magneticum (strain ATCC 700264 / AMB-1) (Magnetospirillum magneticum).